Here is a 201-residue protein sequence, read N- to C-terminus: Small ribosomal subunit protein uS4 (201 aa).

An S4 RNA-binding domain is found at 91–151 (SRLDNVVYRA…EKSQKMNWFE (61 aa)).

It belongs to the universal ribosomal protein uS4 family. In terms of assembly, part of the 30S ribosomal subunit. Contacts protein S5. The interaction surface between S4 and S5 is involved in control of translational fidelity.

In terms of biological role, one of the primary rRNA binding proteins, it binds directly to 16S rRNA where it nucleates assembly of the body of the 30S subunit. Functionally, with S5 and S12 plays an important role in translational accuracy. This chain is Small ribosomal subunit protein uS4, found in Corynebacterium glutamicum (strain ATCC 13032 / DSM 20300 / JCM 1318 / BCRC 11384 / CCUG 27702 / LMG 3730 / NBRC 12168 / NCIMB 10025 / NRRL B-2784 / 534).